A 148-amino-acid polypeptide reads, in one-letter code: Deoxyuridine 5'-triphosphate nucleotidohydrolase (148 aa).

Substrate-binding positions include 65 to 67 (RSG), Asn-78, 82 to 84 (TID), and Lys-92.

The protein belongs to the dUTPase family. It depends on Mg(2+) as a cofactor.

The enzyme catalyses dUTP + H2O = dUMP + diphosphate + H(+). The protein operates within pyrimidine metabolism; dUMP biosynthesis; dUMP from dCTP (dUTP route): step 2/2. In terms of biological role, this enzyme is involved in nucleotide metabolism: it produces dUMP, the immediate precursor of thymidine nucleotides and it decreases the intracellular concentration of dUTP so that uracil cannot be incorporated into DNA. This chain is Deoxyuridine 5'-triphosphate nucleotidohydrolase, found in Chlorobium phaeovibrioides (strain DSM 265 / 1930) (Prosthecochloris vibrioformis (strain DSM 265)).